Consider the following 196-residue polypeptide: Deoxyribose-phosphate aldolase (196 aa).

Asp-91 serves as the catalytic Proton donor/acceptor. Lys-153 functions as the Schiff-base intermediate with acetaldehyde in the catalytic mechanism. Lys-182 serves as the catalytic Proton donor/acceptor.

The protein belongs to the DeoC/FbaB aldolase family. DeoC type 1 subfamily.

It is found in the cytoplasm. It carries out the reaction 2-deoxy-D-ribose 5-phosphate = D-glyceraldehyde 3-phosphate + acetaldehyde. It participates in carbohydrate degradation; 2-deoxy-D-ribose 1-phosphate degradation; D-glyceraldehyde 3-phosphate and acetaldehyde from 2-deoxy-alpha-D-ribose 1-phosphate: step 2/2. Catalyzes a reversible aldol reaction between acetaldehyde and D-glyceraldehyde 3-phosphate to generate 2-deoxy-D-ribose 5-phosphate. This is Deoxyribose-phosphate aldolase from Mycoplasma mycoides subsp. mycoides SC (strain CCUG 32753 / NCTC 10114 / PG1).